The sequence spans 219 residues: Elongation factor Ts (219 aa).

Residues 81 to 84 (SDFV) are involved in Mg(2+) ion dislocation from EF-Tu.

This sequence belongs to the EF-Ts family.

The protein resides in the cytoplasm. Its function is as follows. Associates with the EF-Tu.GDP complex and induces the exchange of GDP to GTP. It remains bound to the aminoacyl-tRNA.EF-Tu.GTP complex up to the GTP hydrolysis stage on the ribosome. In Koribacter versatilis (strain Ellin345), this protein is Elongation factor Ts.